The sequence spans 140 residues: Large ribosomal subunit protein uL11 (140 aa).

It belongs to the universal ribosomal protein uL11 family. As to quaternary structure, part of the ribosomal stalk of the 50S ribosomal subunit. Interacts with L10 and the large rRNA to form the base of the stalk. L10 forms an elongated spine to which L12 dimers bind in a sequential fashion forming a multimeric L10(L12)X complex. One or more lysine residues are methylated.

In terms of biological role, forms part of the ribosomal stalk which helps the ribosome interact with GTP-bound translation factors. The protein is Large ribosomal subunit protein uL11 of Oleidesulfovibrio alaskensis (strain ATCC BAA-1058 / DSM 17464 / G20) (Desulfovibrio alaskensis).